Consider the following 328-residue polypeptide: Beta-ribofuranosylphenol 5'-phosphate synthase (328 aa).

Belongs to the beta-RFA-P synthase family. Homodimer. Mg(2+) serves as cofactor.

It catalyses the reaction 5-phospho-alpha-D-ribose 1-diphosphate + 4-hydroxybenzoate + H(+) = 4-(beta-D-ribofuranosyl)phenol 5'-phosphate + CO2 + diphosphate. It carries out the reaction 4-aminobenzoate + 5-phospho-alpha-D-ribose 1-diphosphate + H(+) = 4-(beta-D-ribofuranosyl)aminobenzene 5'-phosphate + CO2 + diphosphate. The protein operates within cofactor biosynthesis; 5,6,7,8-tetrahydromethanopterin biosynthesis. Catalyzes the condensation of 4-hydroxybenzoate (HB) with 5-phospho-alpha-D-ribose 1-diphosphate (PRPP) to produce beta-ribofuranosylphenol 5'-phosphate (beta-RFH-P). Also catalyzes the condensation of 4-aminobenzoate (pABA) with PRPP to produce beta-ribofuranosylaminobenzene 5'-phosphate (beta-RFA-P). Only 4-hydroxybenzoate is known to be biosynthesized by methanogenic archaea, but 4-aminobenzoate can be used as substrate by growing methanogens when it is present in the growth medium. The protein is Beta-ribofuranosylphenol 5'-phosphate synthase of Methanocaldococcus jannaschii (strain ATCC 43067 / DSM 2661 / JAL-1 / JCM 10045 / NBRC 100440) (Methanococcus jannaschii).